A 369-amino-acid polypeptide reads, in one-letter code: Cytochrome b561 and DOMON domain-containing protein At3g07570 (369 aa).

A signal peptide spans Met-1 to Ala-22. The 113-residue stretch at Gln-55 to Gly-167 folds into the DOMON domain. A Cytochrome b561 domain is found at Ser-174–Lys-369. The chain crosses the membrane as a helical span at residues Thr-212 to Ala-232. 2 residues coordinate heme b: His-213 and His-246. Transmembrane regions (helical) follow at residues Ile-247–Leu-267 and His-279–Ala-299. His-279 and His-315 together coordinate heme b. 2 helical membrane passes run Leu-321 to Thr-341 and Trp-343 to Val-363.

Requires heme b as cofactor.

Its subcellular location is the membrane. Functionally, may act as a catecholamine-responsive trans-membrane electron transporter. The polypeptide is Cytochrome b561 and DOMON domain-containing protein At3g07570 (Arabidopsis thaliana (Mouse-ear cress)).